The chain runs to 321 residues: Cytochrome c biogenesis protein CcsA (321 aa).

A run of 7 helical transmembrane segments spans residues 17–37, 41–61, 68–88, 143–163, 227–247, 260–277, and 288–308; these read IISI…IIGL, LEKG…IRWV, LSNL…IHIF, MLLS…LLVI, IINL…VWAN, ETWA…LHTR, and AIVA…VNLL.

Belongs to the CcmF/CycK/Ccl1/NrfE/CcsA family. In terms of assembly, may interact with Ccs1.

It is found in the plastid. It localises to the chloroplast thylakoid membrane. Its function is as follows. Required during biogenesis of c-type cytochromes (cytochrome c6 and cytochrome f) at the step of heme attachment. The protein is Cytochrome c biogenesis protein CcsA of Piper cenocladum (Ant piper).